Consider the following 300-residue polypeptide: GTPase Era (300 aa).

An Era-type G domain is found at 5 to 176; sequence HSGFVCLVGR…IDVLAAALPA (172 aa). A G1 region spans residues 13–20; the sequence is GRPNTGKS. GTP is bound at residue 13-20; that stretch reads GRPNTGKS. Positions 39–43 are G2; that stretch reads QTTRH. The interval 60–63 is G3; that stretch reads DTPG. GTP-binding positions include 60-64 and 125-128; these read DTPGL and TKID. The G4 stretch occupies residues 125–128; that stretch reads TKID. A G5 region spans residues 155 to 157; sequence VSA. The KH type-2 domain occupies 207–286; the sequence is VRDELPHSLA…YLDLRVKVAK (80 aa).

This sequence belongs to the TRAFAC class TrmE-Era-EngA-EngB-Septin-like GTPase superfamily. Era GTPase family. In terms of assembly, monomer.

It localises to the cell envelope. It is found in the secreted. The protein resides in the cell wall. Its function is as follows. Exhibits GTPase activity. Binds RNA but is probably not involved in ribosome assembly in mycobacteria. This is GTPase Era from Mycobacterium bovis (strain ATCC BAA-935 / AF2122/97).